A 118-amino-acid polypeptide reads, in one-letter code: Basic phospholipase A2 nigroxin B (118 aa).

7 cysteine pairs are disulfide-bonded: C11–C70, C25–C117, C27–C43, C42–C98, C49–C91, C59–C84, and C77–C89. Residues Y26, G28, and G30 each contribute to the Ca(2+) site. Residue H46 is part of the active site. Position 47 (D47) interacts with Ca(2+). The active site involves D92.

It belongs to the phospholipase A2 family. Group I subfamily. D49 sub-subfamily. Ca(2+) serves as cofactor. Expressed by the venom gland.

It localises to the secreted. The catalysed reaction is a 1,2-diacyl-sn-glycero-3-phosphocholine + H2O = a 1-acyl-sn-glycero-3-phosphocholine + a fatty acid + H(+). Its function is as follows. Snake venom phospholipase A2 (PLA2) that has only a weak enzymatic activity. It has a myotoxic activity in vivo (dystrophic effect). PLA2 catalyzes the calcium-dependent hydrolysis of the 2-acyl groups in 3-sn-phosphoglycerides. The protein is Basic phospholipase A2 nigroxin B of Micrurus nigrocinctus (Central American coral snake).